Here is a 486-residue protein sequence, read N- to C-terminus: MSQHSQYDAPGVPVQPSLSFTQGFLLGQLSVVLLIGAFIKFFIFGEAPAPPSRGLASRTASHHRSYSINQGDNNVSNNNTSGGSPRTLCEKPSTSNVLRPVPSSATNTRSILRKTYYNAIPTQFSHTKQGRHRIQHSTHQPESLDWFNVLIAQTIAQYRQTAYLLKDSPTSSILDSLSAAINDPQKKPSFIDTIKVTDISLGEEFPIFSNCRVIVVDDPNSDGGRLQALMDVDLSDDNLSLAIETSLILNYPKPRSAVLPVALSVSVVRFSGTLCISLIPAATEQSPSSAPTPDASNLNVRTLFQHISAELNGTAANPTANPEKKGVPKTNLAFSFLPDYRLDLSVRSLIGSRSRLQDVPKVAQLVEARIHSWFEERVVEPRVQVVGLPDFWPRKGRTGVRPGEDAEAAAAVAAASASSRGGAPEATPSVPEEAIIDDSPVRPGLRFRGPAGRYDSGSSFDELPRAGPGLGEPLDIPGSMPGGRAQ.

The Lumenal portion of the chain corresponds to 1–23 (MSQHSQYDAPGVPVQPSLSFTQG). A helical transmembrane segment spans residues 24 to 44 (FLLGQLSVVLLIGAFIKFFIF). The Cytoplasmic portion of the chain corresponds to 45–486 (GEAPAPPSRG…PGSMPGGRAQ (442 aa)). The disordered stretch occupies residues 52-103 (SRGLASRTASHHRSYSINQGDNNVSNNNTSGGSPRTLCEKPSTSNVLRPVPS). The span at 67 to 84 (SINQGDNNVSNNNTSGGS) shows a compositional bias: low complexity. Polar residues predominate over residues 92–103 (PSTSNVLRPVPS). An SMP-LTD domain is found at 140–389 (QPESLDWFNV…EPRVQVVGLP (250 aa)). Residues 413-426 (AAASASSRGGAPEA) are compositionally biased toward low complexity. A disordered region spans residues 413 to 486 (AAASASSRGG…PGSMPGGRAQ (74 aa)).

The protein belongs to the MMM1 family. In terms of assembly, homodimer. Component of the ER-mitochondria encounter structure (ERMES) or MDM complex, composed of mmm1, mdm10, mdm12 and mdm34. A mmm1 homodimer associates with one molecule of mdm12 on each side in a pairwise head-to-tail manner, and the SMP-LTD domains of mmm1 and mdm12 generate a continuous hydrophobic tunnel for phospholipid trafficking.

The protein localises to the endoplasmic reticulum membrane. Its function is as follows. Component of the ERMES/MDM complex, which serves as a molecular tether to connect the endoplasmic reticulum (ER) and mitochondria. Components of this complex are involved in the control of mitochondrial shape and protein biogenesis, and function in nonvesicular lipid trafficking between the ER and mitochondria. The mdm12-mmm1 subcomplex functions in the major beta-barrel assembly pathway that is responsible for biogenesis of all outer membrane beta-barrel proteins, and acts in a late step after the SAM complex. The mdm10-mdm12-mmm1 subcomplex further acts in the TOM40-specific pathway after the action of the mdm12-mmm1 complex. Essential for establishing and maintaining the structure of mitochondria and maintenance of mtDNA nucleoids. The polypeptide is Maintenance of mitochondrial morphology protein 1 (Talaromyces marneffei (strain ATCC 18224 / CBS 334.59 / QM 7333) (Penicillium marneffei)).